The following is a 493-amino-acid chain: Leucine-rich repeat-containing protein 14 (493 aa).

The LRR 1; degenerate repeat unit spans residues 111 to 146; the sequence is KHALRVLDMTGLLDDGVEQDPETMSMWDCTAAVART. The stretch at 194-218 is one LRR 2; degenerate repeat; it reads RLCCRDLRAEDLPMRNTVALLQLLD. The LRR 3; degenerate repeat unit spans residues 219–246; that stretch reads AGCLRRIDLRFNNLGLRGLSVIIPHVAR. An LRR 4; degenerate repeat occupies 247–282; that stretch reads FQHLASLRLHYVHGDSRQPSVDGEDNFRYFLAQMGR. LRR repeat units lie at residues 283-307, 308-339, 340-360, 364-391, and 392-416; these read FMCLRELSMGSSLLSGRLDQLLSTL, QRPLESLELAFCALLPEDLRFLAQSSHAAHLK, KLDLSGNDLSGNQLTPFQGLL, ATTLLHLELTECQLADAQLLATLPTLTR, and CASLRYLGLYGNPLSMAGLKELLRD.

The protein belongs to the PRAME family. LRRC14 subfamily. Interacts with IKBKB; disrupts IKBKB-IKBKG interaction preventing I-kappa-B-kinase (IKK) core complex formation and leading to a decrease of IKBKB phosphorylation and NF-kappaB activation. Interacts with CHUK.

It localises to the cytoplasm. In terms of biological role, negatively regulates Toll-like receptor-mediated NF-kappa-B signaling by disrupting IKK core complex formation through interaction with IKBKB. The chain is Leucine-rich repeat-containing protein 14 from Mus musculus (Mouse).